A 305-amino-acid polypeptide reads, in one-letter code: Putative monooxygenase p33MONOX (305 aa).

2 disordered regions span residues 1–20 (MASRQPEVPALEASGPLGKM) and 37–56 (LEDPAPMTPPPSDMGSVPWK). Position 44 is a phosphothreonine (T44). The short motif at 67–77 (LAKVEEGEASL) is the Flavin-containing monooxygenase motif element. The interval 159-305 (SGEITKEERQ…DLNVLTPTGF (147 aa)) is disordered. A compositionally biased stretch (low complexity) spans 169–183 (PASAQSTPSTTPHSS). T175 carries the phosphothreonine modification. A phosphoserine mark is found at S182 and S183. 2 stretches are compositionally biased toward polar residues: residues 191–210 (WFTSGSSTALPGPNPSTMDS) and 233–243 (KYDSGSSTTQA).

It belongs to the P33MONOX family. As to quaternary structure, interacts with NELFB, NOL12 and PRNP.

The protein localises to the cytoplasm. In terms of biological role, potential NADPH-dependent oxidoreductase. May be involved in the regulation of neuronal survival, differentiation and axonal outgrowth. The polypeptide is Putative monooxygenase p33MONOX (P33MONOX) (Pongo abelii (Sumatran orangutan)).